A 277-amino-acid polypeptide reads, in one-letter code: Hemin import ATP-binding protein HmuV (277 aa).

The ABC transporter domain maps to 19–259 (VEVADLNYSV…AIIEEAFGHR (241 aa)). 51-58 (GRNGAGKS) serves as a coordination point for ATP.

This sequence belongs to the ABC transporter superfamily. Heme (hemin) importer (TC 3.A.1.14.5) family. In terms of assembly, the complex is composed of two ATP-binding proteins (HmuV), two transmembrane proteins (HmuU) and a solute-binding protein (HmuT).

Its subcellular location is the cell membrane. Functionally, part of the ABC transporter complex HmuTUV involved in hemin import. Responsible for energy coupling to the transport system. The chain is Hemin import ATP-binding protein HmuV from Deinococcus geothermalis (strain DSM 11300 / CIP 105573 / AG-3a).